The sequence spans 419 residues: MPGNNSAKGTATGNATALWRNAQLATLNPAMDGIGAVENAVIAVRNGRIAFAGPESDLPDDLSTADETTDCGGRWITPALIDCHTHLVFGGNRAMEFEMRLNGATYEEIAKAGGGIVSSVRDTRALSDEVLVAQALPRLDTLLSEGVSTIEIKSGYGLDIETELKMLRVARRLETLRPVRIVTSYLAAHATPADYKGRNADYITDVVLPGLEKAHAEGLADAVDGFCEGIAFSVKEIDRVFAAAQQRGLPVKLHAEQLSNLGGAELAASYNALSADHLEYLDETGAKALAKAGTVAVLLPGAFYALREKQLPPVQALRDAGAEIALATDCNPGTSPLTSLLLTMNMGATLFRMTVEECLTATTRNAAKALGLLAETGTLEAGKSADFAIWDIERPAELVYRIGFNPLHARIFKGQKVSP.

Fe(3+) is bound by residues H84 and H86. The Zn(2+) site is built by H84 and H86. R93, Y156, and H189 together coordinate 4-imidazolone-5-propanoate. Position 156 (Y156) interacts with N-formimidoyl-L-glutamate. H254 is a Fe(3+) binding site. Zn(2+) is bound at residue H254. Position 257 (Q257) interacts with 4-imidazolone-5-propanoate. D329 provides a ligand contact to Fe(3+). Residue D329 coordinates Zn(2+). 2 residues coordinate N-formimidoyl-L-glutamate: N331 and G333. T334 serves as a coordination point for 4-imidazolone-5-propanoate.

This sequence belongs to the metallo-dependent hydrolases superfamily. HutI family. As to quaternary structure, monomer. Forms a tightly packed homodimer in the crystal, but this seems to be an artifact of crystallization. Zn(2+) serves as cofactor. Requires Fe(3+) as cofactor.

It localises to the cytoplasm. It carries out the reaction 4-imidazolone-5-propanoate + H2O = N-formimidoyl-L-glutamate. Its pathway is amino-acid degradation; L-histidine degradation into L-glutamate; N-formimidoyl-L-glutamate from L-histidine: step 3/3. Functionally, catalyzes the hydrolytic cleavage of the carbon-nitrogen bond in imidazolone-5-propanoate to yield N-formimidoyl-L-glutamate. It is the third step in the universal histidine degradation pathway. The chain is Imidazolonepropionase from Agrobacterium fabrum (strain C58 / ATCC 33970) (Agrobacterium tumefaciens (strain C58)).